A 280-amino-acid chain; its full sequence is Thiamine-phosphate synthase (280 aa).

Residues 1–64 (MGWSGSPLTL…ATGRGGLRMT (64 aa)) form a disordered region. Positions 42 to 55 (GRGELRSRERRGEA) are enriched in basic and acidic residues. 4-amino-2-methyl-5-(diphosphooxymethyl)pyrimidine-binding positions include 104-108 (QLRCK) and N141. Residues D142 and D161 each contribute to the Mg(2+) site. S179 serves as a coordination point for 4-amino-2-methyl-5-(diphosphooxymethyl)pyrimidine. 205 to 207 (TPT) serves as a coordination point for 2-[(2R,5Z)-2-carboxy-4-methylthiazol-5(2H)-ylidene]ethyl phosphate. Residue K208 coordinates 4-amino-2-methyl-5-(diphosphooxymethyl)pyrimidine. Position 236 (G236) interacts with 2-[(2R,5Z)-2-carboxy-4-methylthiazol-5(2H)-ylidene]ethyl phosphate.

This sequence belongs to the thiamine-phosphate synthase family. The cofactor is Mg(2+).

The catalysed reaction is 2-[(2R,5Z)-2-carboxy-4-methylthiazol-5(2H)-ylidene]ethyl phosphate + 4-amino-2-methyl-5-(diphosphooxymethyl)pyrimidine + 2 H(+) = thiamine phosphate + CO2 + diphosphate. It carries out the reaction 2-(2-carboxy-4-methylthiazol-5-yl)ethyl phosphate + 4-amino-2-methyl-5-(diphosphooxymethyl)pyrimidine + 2 H(+) = thiamine phosphate + CO2 + diphosphate. The enzyme catalyses 4-methyl-5-(2-phosphooxyethyl)-thiazole + 4-amino-2-methyl-5-(diphosphooxymethyl)pyrimidine + H(+) = thiamine phosphate + diphosphate. It functions in the pathway cofactor biosynthesis; thiamine diphosphate biosynthesis; thiamine phosphate from 4-amino-2-methyl-5-diphosphomethylpyrimidine and 4-methyl-5-(2-phosphoethyl)-thiazole: step 1/1. Condenses 4-methyl-5-(beta-hydroxyethyl)thiazole monophosphate (THZ-P) and 2-methyl-4-amino-5-hydroxymethyl pyrimidine pyrophosphate (HMP-PP) to form thiamine monophosphate (TMP). This is Thiamine-phosphate synthase from Deinococcus radiodurans (strain ATCC 13939 / DSM 20539 / JCM 16871 / CCUG 27074 / LMG 4051 / NBRC 15346 / NCIMB 9279 / VKM B-1422 / R1).